The primary structure comprises 515 residues: Bifunctional purine biosynthesis protein PurH (515 aa).

The 145-residue stretch at 1–145 folds into the MGS-like domain; it reads MTKRALISVS…KNHASVTVVV (145 aa).

The protein belongs to the PurH family.

The catalysed reaction is (6R)-10-formyltetrahydrofolate + 5-amino-1-(5-phospho-beta-D-ribosyl)imidazole-4-carboxamide = 5-formamido-1-(5-phospho-D-ribosyl)imidazole-4-carboxamide + (6S)-5,6,7,8-tetrahydrofolate. It carries out the reaction IMP + H2O = 5-formamido-1-(5-phospho-D-ribosyl)imidazole-4-carboxamide. The protein operates within purine metabolism; IMP biosynthesis via de novo pathway; 5-formamido-1-(5-phospho-D-ribosyl)imidazole-4-carboxamide from 5-amino-1-(5-phospho-D-ribosyl)imidazole-4-carboxamide (10-formyl THF route): step 1/1. It functions in the pathway purine metabolism; IMP biosynthesis via de novo pathway; IMP from 5-formamido-1-(5-phospho-D-ribosyl)imidazole-4-carboxamide: step 1/1. In Streptococcus equi subsp. zooepidemicus (strain H70), this protein is Bifunctional purine biosynthesis protein PurH.